We begin with the raw amino-acid sequence, 328 residues long: Carbonic anhydrase-related protein 11 (328 aa).

The N-terminal stretch at 1–23 (MGAAARLSAPRALVLWAALGAAA) is a signal peptide. Residues 33-303 (DWWSYKDNLQ…LAHRALRGNR (271 aa)) form the Alpha-carbonic anhydrase domain. N-linked (GlcNAc...) asparagine glycosylation is found at N118, N170, and N260. The segment at 299 to 328 (LRGNRDPRHPERRCRGPNYRLHVDGVPHGR) is disordered. Positions 319–328 (LHVDGVPHGR) are enriched in basic and acidic residues.

It belongs to the alpha-carbonic anhydrase family. Expressed abundantly in the brain with moderate expression also present in spinal cord and thyroid.

The protein resides in the secreted. Its function is as follows. Does not have a catalytic activity. This chain is Carbonic anhydrase-related protein 11 (CA11), found in Homo sapiens (Human).